We begin with the raw amino-acid sequence, 238 residues long: Tetraspanin-4 (238 aa).

Topologically, residues 1–13 (MARACLQAVKYLM) are cytoplasmic. Residues 14–34 (FAFNLLFWLGGCGVLGVGIWL) traverse the membrane as a helical segment. The Extracellular portion of the chain corresponds to 35–55 (AATQGSFATLSSSFPSLSAAN). The helical transmembrane segment at 56 to 76 (LLIITGAFVMAIGFVGCLGAI) threads the bilayer. Residues 77 to 85 (KENKCLLLT) lie on the Cytoplasmic side of the membrane. Residues 86–106 (FFLLLLLVFLLEATIAILFFA) form a helical membrane-spanning segment. Over 107–201 (YTDKIDRYAQ…ETVKVWLQEN (95 aa)) the chain is Extracellular. N-linked (GlcNAc...) asparagine glycosylation is found at Asn-152 and Asn-161. A helical transmembrane segment spans residues 202-222 (LLAVGIFGLCTALVQILGLTF). The Cytoplasmic portion of the chain corresponds to 223 to 238 (AMTMYCQVVKADTYCA).

The protein belongs to the tetraspanin (TM4SF) family. As to quaternary structure, forms a complex with integrins.

It is found in the membrane. This is Tetraspanin-4 (TSPAN4) from Pongo abelii (Sumatran orangutan).